Reading from the N-terminus, the 220-residue chain is 7-cyano-7-deazaguanine synthase 1 (220 aa).

10–20 (FSGGIDSTVLL) contributes to the ATP binding site. Residues Cys-183, Cys-191, Cys-194, and Cys-197 each coordinate Zn(2+).

It belongs to the QueC family. In terms of assembly, homodimer. The cofactor is Zn(2+).

It carries out the reaction 7-carboxy-7-deazaguanine + NH4(+) + ATP = 7-cyano-7-deazaguanine + ADP + phosphate + H2O + H(+). It functions in the pathway purine metabolism; 7-cyano-7-deazaguanine biosynthesis. Catalyzes the ATP-dependent conversion of 7-carboxy-7-deazaguanine (CDG) to 7-cyano-7-deazaguanine (preQ(0)). This chain is 7-cyano-7-deazaguanine synthase 1, found in Desulfitobacterium hafniense (strain Y51).